The primary structure comprises 349 residues: tRNA N6-adenosine threonylcarbamoyltransferase (349 aa).

2 residues coordinate Fe cation: H111 and H115. Residues 134 to 138 (LVSGG), D167, G180, D184, and N279 contribute to the substrate site. D307 contacts Fe cation.

The protein belongs to the KAE1 / TsaD family. Fe(2+) serves as cofactor.

The protein localises to the cytoplasm. The enzyme catalyses L-threonylcarbamoyladenylate + adenosine(37) in tRNA = N(6)-L-threonylcarbamoyladenosine(37) in tRNA + AMP + H(+). Functionally, required for the formation of a threonylcarbamoyl group on adenosine at position 37 (t(6)A37) in tRNAs that read codons beginning with adenine. Is involved in the transfer of the threonylcarbamoyl moiety of threonylcarbamoyl-AMP (TC-AMP) to the N6 group of A37, together with TsaE and TsaB. TsaD likely plays a direct catalytic role in this reaction. This chain is tRNA N6-adenosine threonylcarbamoyltransferase, found in Nostoc punctiforme (strain ATCC 29133 / PCC 73102).